Consider the following 582-residue polypeptide: A-type ATP synthase subunit A 1 (582 aa).

231–238 lines the ATP pocket; sequence GPFGSGKT.

It belongs to the ATPase alpha/beta chains family. As to quaternary structure, has multiple subunits with at least A(3), B(3), C, D, E, F, H, I and proteolipid K(x).

It is found in the cell membrane. The enzyme catalyses ATP + H2O + 4 H(+)(in) = ADP + phosphate + 5 H(+)(out). Its function is as follows. Component of the A-type ATP synthase that produces ATP from ADP in the presence of a proton gradient across the membrane. The A chain is the catalytic subunit. The polypeptide is A-type ATP synthase subunit A 1 (Methanospirillum hungatei JF-1 (strain ATCC 27890 / DSM 864 / NBRC 100397 / JF-1)).